Here is a 611-residue protein sequence, read N- to C-terminus: L-tyrosine decarboxylase (611 aa).

Pyridoxal 5'-phosphate is bound by residues 151–152, threonine 292, and 382–384; these read GS and DPH. The residue at position 385 (lysine 385) is an N6-(pyridoxal phosphate)lysine. The Proton donor role is filled by tyrosine 413. Serine 433 lines the pyridoxal 5'-phosphate pocket.

It belongs to the group II decarboxylase family. Tyrosine decarboxylase subfamily. Homodimer. It depends on pyridoxal 5'-phosphate as a cofactor.

The catalysed reaction is L-tyrosine + H(+) = tyramine + CO2. The enzyme catalyses L-dopa + H(+) = dopamine + CO2. Its pathway is amino-acid metabolism. Levodopa decarboxylation is not inhibited by carbidopa, benserazide, and methyldopa, that are three human L-dopa decarboxylase inhibitors. Its function is as follows. Catalyzes the decarboxylation of L-tyrosine to produce tyramine. Plays a role in acid resistance since tyramine production via tyrosine decarboxylation appears to provide a cytosolic pH maintenance mechanism that helps the bacterium cope with acid stress such as that encountered in gastrointestinal tract (GIT) environments. Therefore, may contribute to the colonization of the human GIT by E.faecium. Also involved in drug metabolism, being able to catalyze decarboxylation of levodopa (L-dopa) to dopamine. In gut microbiota this enzyme is in fact exclusively responsible for the decarboxylation of levodopa, and thus reduces in situ levels of levodopa in the treatment of Parkinson's disease. It was shown that abundance of bacterial tyrosine decarboxylase in the proximal small intestine - the primary site of levodopa absorption - contributes to interindividual variation in drug efficacy and can explain the requirement for an increased dosage regimen of levodopa treatment in Parkinson's disease patients. In Enterococcus faecium (Streptococcus faecium), this protein is L-tyrosine decarboxylase.